We begin with the raw amino-acid sequence, 284 residues long: 2-dehydro-3-deoxyphosphooctonate aldolase (284 aa).

Belongs to the KdsA family.

Its subcellular location is the cytoplasm. It catalyses the reaction D-arabinose 5-phosphate + phosphoenolpyruvate + H2O = 3-deoxy-alpha-D-manno-2-octulosonate-8-phosphate + phosphate. Its pathway is carbohydrate biosynthesis; 3-deoxy-D-manno-octulosonate biosynthesis; 3-deoxy-D-manno-octulosonate from D-ribulose 5-phosphate: step 2/3. The protein operates within bacterial outer membrane biogenesis; lipopolysaccharide biosynthesis. The protein is 2-dehydro-3-deoxyphosphooctonate aldolase of Enterobacter sp. (strain 638).